Reading from the N-terminus, the 367-residue chain is Glutamate 5-kinase (367 aa).

Lysine 9 contacts ATP. Substrate-binding residues include serine 49, aspartate 136, and asparagine 148. Residues 168–169 (TD) and 210–216 (TGGMKSK) contribute to the ATP site. The PUA domain occupies 276-350 (SGQIEIDAGA…GMQSQHIQAR (75 aa)).

It belongs to the glutamate 5-kinase family.

The protein localises to the cytoplasm. The catalysed reaction is L-glutamate + ATP = L-glutamyl 5-phosphate + ADP. The protein operates within amino-acid biosynthesis; L-proline biosynthesis; L-glutamate 5-semialdehyde from L-glutamate: step 1/2. Functionally, catalyzes the transfer of a phosphate group to glutamate to form L-glutamate 5-phosphate. This chain is Glutamate 5-kinase, found in Bacillus cereus (strain ATCC 10987 / NRS 248).